A 98-amino-acid polypeptide reads, in one-letter code: MSLVYMNIMIAFLTSLLGLLMYRSHLMSSLLCLEGMMLSLFILSTIMILNIHFTLASMIPIILLVFAACEAAIGLSLLVMVSNTYGVDYVQNLNLLQC.

3 helical membrane-spanning segments follow: residues 1–21 (MSLV…GLLM), 29–49 (SLLC…IMIL), and 61–81 (IILL…LVMV).

The protein belongs to the complex I subunit 4L family. In terms of assembly, core subunit of respiratory chain NADH dehydrogenase (Complex I) which is composed of 45 different subunits.

Its subcellular location is the mitochondrion inner membrane. It carries out the reaction a ubiquinone + NADH + 5 H(+)(in) = a ubiquinol + NAD(+) + 4 H(+)(out). Functionally, core subunit of the mitochondrial membrane respiratory chain NADH dehydrogenase (Complex I) which catalyzes electron transfer from NADH through the respiratory chain, using ubiquinone as an electron acceptor. Part of the enzyme membrane arm which is embedded in the lipid bilayer and involved in proton translocation. The chain is NADH-ubiquinone oxidoreductase chain 4L (MT-ND4L) from Mogera wogura (Japanese mole).